A 650-amino-acid chain; its full sequence is Fructose-1,6-bisphosphatase class 3 (650 aa).

It belongs to the FBPase class 3 family. It depends on Mn(2+) as a cofactor.

The enzyme catalyses beta-D-fructose 1,6-bisphosphate + H2O = beta-D-fructose 6-phosphate + phosphate. Its pathway is carbohydrate biosynthesis; gluconeogenesis. The sequence is that of Fructose-1,6-bisphosphatase class 3 from Staphylococcus xylosus.